A 225-amino-acid polypeptide reads, in one-letter code: 2-phytyl-1,4-naphtoquinone methyltransferase (225 aa).

The protein belongs to the class I-like SAM-binding methyltransferase superfamily. MenG/UbiE family.

It carries out the reaction demethylphylloquinol + S-adenosyl-L-methionine = phylloquinol + S-adenosyl-L-homocysteine + H(+). The protein operates within cofactor biosynthesis; phylloquinone biosynthesis. Functionally, methyltransferase required for the conversion of 2-phytyl-1,4-beta-naphthoquinol to phylloquinol. The polypeptide is 2-phytyl-1,4-naphtoquinone methyltransferase (Thermosynechococcus vestitus (strain NIES-2133 / IAM M-273 / BP-1)).